We begin with the raw amino-acid sequence, 341 residues long: NADH-quinone oxidoreductase subunit H (341 aa).

Transmembrane regions (helical) follow at residues 6-26 (LIVSYLVGFVLLNVLLGLMAY), 76-96 (LVFLVAPLLSFALAPLGAAVI), 118-138 (VAVLYVLALGSVGVYGIILGG), 157-177 (VISYELVLGLSLVGVFILSGS), 198-218 (LPNWYILSQPLAFALFLIAAV), 252-272 (FLAEYINMIVVSLLAATLFLG), 278-298 (FADGVWWLALKALFFLFFYVW), and 313-333 (GLAWKVLLPLALLNIGLTGLV).

Belongs to the complex I subunit 1 family. As to quaternary structure, NDH-1 is composed of 14 different subunits. Subunits NuoA, H, J, K, L, M, N constitute the membrane sector of the complex.

It localises to the cell membrane. It carries out the reaction a quinone + NADH + 5 H(+)(in) = a quinol + NAD(+) + 4 H(+)(out). Functionally, NDH-1 shuttles electrons from NADH, via FMN and iron-sulfur (Fe-S) centers, to quinones in the respiratory chain. The immediate electron acceptor for the enzyme in this species is believed to be ubiquinone. Couples the redox reaction to proton translocation (for every two electrons transferred, four hydrogen ions are translocated across the cytoplasmic membrane), and thus conserves the redox energy in a proton gradient. This subunit may bind ubiquinone. This Thermomicrobium roseum (strain ATCC 27502 / DSM 5159 / P-2) protein is NADH-quinone oxidoreductase subunit H.